The sequence spans 122 residues: Large ribosomal subunit protein uL14 (122 aa).

The protein belongs to the universal ribosomal protein uL14 family. In terms of assembly, part of the 50S ribosomal subunit. Forms a cluster with proteins L3 and L19. In the 70S ribosome, L14 and L19 interact and together make contacts with the 16S rRNA in bridges B5 and B8.

Its function is as follows. Binds to 23S rRNA. Forms part of two intersubunit bridges in the 70S ribosome. The sequence is that of Large ribosomal subunit protein uL14 from Helicobacter acinonychis (strain Sheeba).